Consider the following 151-residue polypeptide: MGRMHSRGKGISSSALPYKRTPPSWLKTAASDVEEMIMKAAKKGQMPSQIGVVLRDQHGIPLVKSVTGSKILRILKAHGLAPEIPEDLYFLIKKAVAIRKHLERNRKDKDSKFRLILVESRIHRLARYYKRTKKLPPTWKYESTTASTLVA.

This sequence belongs to the universal ribosomal protein uS15 family.

The chain is Small ribosomal subunit protein uS15y from Oryza sativa subsp. japonica (Rice).